The following is a 160-amino-acid chain: Small ribosomal subunit protein uS9 (160 aa).

Belongs to the universal ribosomal protein uS9 family.

This Cereibacter sphaeroides (strain ATCC 17029 / ATH 2.4.9) (Rhodobacter sphaeroides) protein is Small ribosomal subunit protein uS9.